Consider the following 344-residue polypeptide: tRNA N6-adenosine threonylcarbamoyltransferase (344 aa).

Positions 119 and 123 each coordinate Fe cation. Residues 141–145, Asp-174, Gly-187, Asp-191, and Asn-280 contribute to the substrate site; that span reads VVSGG. Residue Asp-310 participates in Fe cation binding.

It belongs to the KAE1 / TsaD family. Fe(2+) is required as a cofactor.

The protein localises to the cytoplasm. The catalysed reaction is L-threonylcarbamoyladenylate + adenosine(37) in tRNA = N(6)-L-threonylcarbamoyladenosine(37) in tRNA + AMP + H(+). Required for the formation of a threonylcarbamoyl group on adenosine at position 37 (t(6)A37) in tRNAs that read codons beginning with adenine. Is involved in the transfer of the threonylcarbamoyl moiety of threonylcarbamoyl-AMP (TC-AMP) to the N6 group of A37, together with TsaE and TsaB. TsaD likely plays a direct catalytic role in this reaction. This is tRNA N6-adenosine threonylcarbamoyltransferase from Listeria monocytogenes serotype 4b (strain CLIP80459).